The sequence spans 129 residues: Large ribosomal subunit protein bL12 (129 aa).

It belongs to the bacterial ribosomal protein bL12 family. As to quaternary structure, homodimer. Part of the ribosomal stalk of the 50S ribosomal subunit. Forms a multimeric L10(L12)X complex, where L10 forms an elongated spine to which 2 to 4 L12 dimers bind in a sequential fashion. Binds GTP-bound translation factors.

Functionally, forms part of the ribosomal stalk which helps the ribosome interact with GTP-bound translation factors. Is thus essential for accurate translation. This is Large ribosomal subunit protein bL12 from Pseudothermotoga lettingae (strain ATCC BAA-301 / DSM 14385 / NBRC 107922 / TMO) (Thermotoga lettingae).